Here is a 346-residue protein sequence, read N- to C-terminus: Annexin A1 (346 aa).

At S5 the chain carries Phosphoserine; by TRPM7. An Isoglutamyl lysine isopeptide (Gln-Lys) (interchain with K-?) cross-link involves residue Q19. Y21 carries the post-translational modification Phosphotyrosine; by EGFR. 2 positions are modified to phosphoserine: S34 and S37. 4 Annexin repeats span residues 42-113, 114-185, 197-269, and 273-344; these read FNPS…ALLK, TPAR…SLAK, DLAD…AIVK, and SKPM…ALCG. K58 carries the N6-acetyllysine modification. Residues G59, V60, E62, K97, L100, E105, M127, G129, G131, T132, and E134 each coordinate Ca(2+). T136 is modified (phosphothreonine). 3 residues coordinate Ca(2+): D171, G210, and R213. A Glycyl lysine isopeptide (Lys-Gly) (interchain with G-Cter in SUMO1); alternate cross-link involves residue K214. Residue K214 forms a Glycyl lysine isopeptide (Lys-Gly) (interchain with G-Cter in SUMO2); alternate linkage. Ca(2+)-binding residues include G215, D253, E255, and M256. K257 participates in a covalent cross-link: Glycyl lysine isopeptide (Lys-Gly) (interchain with G-Cter in SUMO1). 4 residues coordinate Ca(2+): E261, M286, G288, and G290. K312 carries the N6-acetyllysine modification. An intrachain disulfide couples C324 to C343. Residues L328, E330, and T331 each coordinate Ca(2+). K332 participates in a covalent cross-link: Glycyl lysine isopeptide (Lys-Gly) (interchain with G-Cter in SUMO1). E336 contributes to the Ca(2+) binding site.

The protein belongs to the annexin family. In terms of assembly, homodimer; non-covalently linked. Homodimer; linked by transglutamylation. Homodimers linked by transglutamylation are observed in placenta, but not in other tissues. Interacts with S100A11. Heterotetramer, formed by two molecules each of S100A11 and ANXA1. Interacts with DYSF. Interacts with EGFR. Phosphorylated by protein kinase C, EGFR and TRPM7. Phosphorylated in response to EGF treatment. Post-translationally, sumoylated. In terms of processing, proteolytically cleaved by cathepsin CTSG to release the active N-terminal peptide Ac2-26.

The protein resides in the nucleus. It is found in the cytoplasm. Its subcellular location is the cell projection. It localises to the cilium. The protein localises to the basolateral cell membrane. The protein resides in the lateral cell membrane. It is found in the cell membrane. Its subcellular location is the apical cell membrane. It localises to the membrane. The protein localises to the early endosome. The protein resides in the cytoplasmic vesicle membrane. It is found in the endosome membrane. Its subcellular location is the secreted. It localises to the extracellular space. The protein localises to the extracellular exosome. The protein resides in the cytoplasmic vesicle. It is found in the secretory vesicle lumen. Its subcellular location is the phagocytic cup. In terms of biological role, plays important roles in the innate immune response as effector of glucocorticoid-mediated responses and regulator of the inflammatory process. Has anti-inflammatory activity. Plays a role in glucocorticoid-mediated down-regulation of the early phase of the inflammatory response. Contributes to the adaptive immune response by enhancing signaling cascades that are triggered by T-cell activation, regulates differentiation and proliferation of activated T-cells. Promotes the differentiation of T-cells into Th1 cells and negatively regulates differentiation into Th2 cells. Has no effect on unstimulated T-cells. Negatively regulates hormone exocytosis via activation of the formyl peptide receptors and reorganization of the actin cytoskeleton. Has high affinity for Ca(2+) and can bind up to eight Ca(2+) ions. Displays Ca(2+)-dependent binding to phospholipid membranes. Plays a role in the formation of phagocytic cups and phagosomes. Plays a role in phagocytosis by mediating the Ca(2+)-dependent interaction between phagosomes and the actin cytoskeleton. Functions at least in part by activating the formyl peptide receptors and downstream signaling cascades. Promotes chemotaxis of granulocytes and monocytes via activation of the formyl peptide receptors. Promotes rearrangement of the actin cytoskeleton, cell polarization and cell migration. Promotes resolution of inflammation and wound healing. Acts via neutrophil N-formyl peptide receptors to enhance the release of CXCL2. The sequence is that of Annexin A1 (ANXA1) from Equus caballus (Horse).